The chain runs to 105 residues: Nucleoid-associated protein OCAR_7544/OCA5_c05960 (105 aa).

It belongs to the YbaB/EbfC family. In terms of assembly, homodimer.

It is found in the cytoplasm. It localises to the nucleoid. Its function is as follows. Binds to DNA and alters its conformation. May be involved in regulation of gene expression, nucleoid organization and DNA protection. The chain is Nucleoid-associated protein OCAR_7544/OCA5_c05960 from Afipia carboxidovorans (strain ATCC 49405 / DSM 1227 / KCTC 32145 / OM5) (Oligotropha carboxidovorans).